The sequence spans 136 residues: Cell division protein SepF 3 (136 aa).

Belongs to the SepF family. Homodimer. Interacts with FtsZ.

It is found in the cytoplasm. Cell division protein that is part of the divisome complex and is recruited early to the Z-ring. Probably stimulates Z-ring formation, perhaps through the cross-linking of FtsZ protofilaments. Its function overlaps with FtsA. The sequence is that of Cell division protein SepF 3 from Streptomyces coelicolor (strain ATCC BAA-471 / A3(2) / M145).